The following is a 361-amino-acid chain: DNA replication and repair protein RecF (361 aa).

ATP is bound at residue 30 to 37; sequence GPNGSGKT.

It belongs to the RecF family.

The protein resides in the cytoplasm. The RecF protein is involved in DNA metabolism; it is required for DNA replication and normal SOS inducibility. RecF binds preferentially to single-stranded, linear DNA. It also seems to bind ATP. In Yersinia pestis, this protein is DNA replication and repair protein RecF.